A 154-amino-acid polypeptide reads, in one-letter code: Myoglobin (154 aa).

The region spanning Gly2 to Lys148 is the Globin domain. Ser4 is subject to Phosphoserine. A nitrite-binding site is contributed by His65. Residue His65 coordinates O2. At Thr68 the chain carries Phosphothreonine. Position 94 (His94) interacts with heme b.

Belongs to the globin family. Monomeric.

It localises to the cytoplasm. The protein resides in the sarcoplasm. The enzyme catalyses Fe(III)-heme b-[protein] + nitric oxide + H2O = Fe(II)-heme b-[protein] + nitrite + 2 H(+). It catalyses the reaction H2O2 + AH2 = A + 2 H2O. Its function is as follows. Monomeric heme protein which primary function is to store oxygen and facilitate its diffusion within muscle tissues. Reversibly binds oxygen through a pentacoordinated heme iron and enables its timely and efficient release as needed during periods of heightened demand. Depending on the oxidative conditions of tissues and cells, and in addition to its ability to bind oxygen, it also has a nitrite reductase activity whereby it regulates the production of bioactive nitric oxide. Under stress conditions, like hypoxia and anoxia, it also protects cells against reactive oxygen species thanks to its pseudoperoxidase activity. This is Myoglobin (MB) from Otolemur crassicaudatus (Brown greater galago).